The following is a 278-amino-acid chain: Small ribosomal subunit protein uS3 (278 aa).

The KH type-2 domain maps to 39-107 (LRKAIAKKYV…KVQLNIVEIS (69 aa)). The disordered stretch occupies residues 244–278 (AKPKRVTKKAEAEASAEEKPKRAAKKAENITKEEE). A compositionally biased stretch (basic and acidic residues) spans 251–278 (KKAEAEASAEEKPKRAAKKAENITKEEE).

This sequence belongs to the universal ribosomal protein uS3 family. As to quaternary structure, part of the 30S ribosomal subunit. Forms a tight complex with proteins S10 and S14.

Binds the lower part of the 30S subunit head. Binds mRNA in the 70S ribosome, positioning it for translation. The protein is Small ribosomal subunit protein uS3 of Dehalococcoides mccartyi (strain ATCC BAA-2266 / KCTC 15142 / 195) (Dehalococcoides ethenogenes (strain 195)).